We begin with the raw amino-acid sequence, 142 residues long: Ribosome-binding factor A (142 aa).

The protein belongs to the RbfA family. Monomer. Binds 30S ribosomal subunits, but not 50S ribosomal subunits or 70S ribosomes.

The protein localises to the cytoplasm. Its function is as follows. One of several proteins that assist in the late maturation steps of the functional core of the 30S ribosomal subunit. Associates with free 30S ribosomal subunits (but not with 30S subunits that are part of 70S ribosomes or polysomes). Required for efficient processing of 16S rRNA. May interact with the 5'-terminal helix region of 16S rRNA. The protein is Ribosome-binding factor A of Leifsonia xyli subsp. xyli (strain CTCB07).